We begin with the raw amino-acid sequence, 400 residues long: Phosphoglycerate kinase (400 aa).

Substrate contacts are provided by residues 22 to 24 (DFN), R38, 61 to 64 (HLGR), R120, and R153. Residues K206, G297, E328, and 354-357 (GGDT) each bind ATP.

It belongs to the phosphoglycerate kinase family. As to quaternary structure, monomer.

It is found in the cytoplasm. The catalysed reaction is (2R)-3-phosphoglycerate + ATP = (2R)-3-phospho-glyceroyl phosphate + ADP. Its pathway is carbohydrate degradation; glycolysis; pyruvate from D-glyceraldehyde 3-phosphate: step 2/5. This chain is Phosphoglycerate kinase, found in Campylobacter curvus (strain 525.92).